We begin with the raw amino-acid sequence, 1211 residues long: Diacylglycerol kinase eta (1211 aa).

The segment at 1–66 (MAGAGSQHHP…QMRTKTSIKE (66 aa)) is disordered. The span at 19–32 (AGASAVSPTAAGPG) shows a compositional bias: low complexity. Polar residues predominate over residues 52-61 (VSTSGQMRTK). The PH domain occupies 62–155 (TSIKEGQLLK…WISSLKSVQS (94 aa)). 2 Phorbol-ester/DAG-type zinc fingers span residues 172 to 222 (MHNW…TNNC) and 244 to 295 (PHQW…HPVC). Residues 325 to 460 (FCVSPLLVFV…LDRWSIMTYE (136 aa)) form the DAGKc domain. 2 disordered regions span residues 562–613 (SQAS…KPRE) and 634–694 (KVMD…SVAG). Acidic residues-rich tracts occupy residues 576–589 (PEED…DESL) and 653–662 (YDTETDEAKE). Positions 670-691 (SAKTTSQSPDAQASCGHPQTDS) are enriched in polar residues. The region spanning 1143-1206 (WGTEEVAAWL…LQGIKELERN (64 aa)) is the SAM domain.

It belongs to the eukaryotic diacylglycerol kinase family. As to quaternary structure, interacts with RAF1 and BRAF. In terms of assembly, homooligomers. Heterooligomers. Oligomerization through the SAM domain inhibits the diacylglycerol kinase activity. Heterooligomerizes with SAM domain-containing isoforms of DGKD. Does not form homooligomers. Post-translationally, phosphorylated. Phosphorylation does not inhibit catalytic activity. In terms of tissue distribution, widely expressed. Detected in the granulosa cells of the primary and secondary follicles. Expressed in mature follicles and corpus lutea. Expressed in the oviductal epithelium. In the uterus, strongly expressed in the luminal epithelium. Detected in the uterine glands. Detected in ovary and uterus (at protein level). As to expression, specifically expressed in testis. Detected in the inner area of the testis. Strongly expressed in the secondary spermatocytes and the round spermatids and weakly detected in the primary spermatocytes.

The protein resides in the cytoplasm. It is found in the cell membrane. It localises to the cytoskeleton. The catalysed reaction is a 1,2-diacyl-sn-glycerol + ATP = a 1,2-diacyl-sn-glycero-3-phosphate + ADP + H(+). The enzyme catalyses 1,2-di-(9Z-octadecenoyl)-sn-glycerol + ATP = 1,2-di-(9Z-octadecenoyl)-sn-glycero-3-phosphate + ADP + H(+). It participates in lipid metabolism; glycerolipid metabolism. Diacylglycerol kinase that converts diacylglycerol/DAG into phosphatidic acid/phosphatidate/PA and regulates the respective levels of these two bioactive lipids. Thereby, acts as a central switch between the signaling pathways activated by these second messengers with different cellular targets and opposite effects in numerous biological processes. Plays a key role in promoting cell growth. Activates the Ras/B-Raf/C-Raf/MEK/ERK signaling pathway induced by EGF. Regulates the recruitment of RAF1 and BRAF from cytoplasm to membranes and their heterodimerization. This is Diacylglycerol kinase eta from Mus musculus (Mouse).